The sequence spans 337 residues: MKRFFAILGAALFVGNSGAFAEQATLIDFSKLVGEGNTGLHAPTTIDYSRQAGSAYSAEDKAAMKISLAIPSWEIELASSSQTVENQTLSLVTAAPVKQDAARYGGETVMGVRIHFPSFGINSFAVIKPPFTIPAYATLGDATAQNAVAGGQFDGFGVLKNVGVIKSIQINILGRNYLNRLSLLLEDQNGDEREIVMGYLNFDGWKSLQWNNPNYQTEVRNRDLQIVPLYPRSAPLIKLKGIKIHRDGSQEGGDIVSYIKDIKVIYDQAVVDRNSDVDDEAIWGILRQREEQYRNFELAKLGNLQVLRSLEKKKMAKEADFDQAAPAAAAARAPATN.

Positions 1 to 21 are cleaved as a signal peptide; the sequence is MKRFFAILGAALFVGNSGAFA.

In terms of assembly, the flagellum consists of an outer layer composed of repeating units of FlaA around a core that contains one or all of five antigenically related polypeptides.

The protein resides in the periplasmic flagellum. Its subcellular location is the periplasm. Component of the outer layer of the flagella. The chain is Flagellar filament outer layer protein (flaA) from Spirochaeta aurantia.